Reading from the N-terminus, the 197-residue chain is Probable molybdenum cofactor guanylyltransferase (197 aa).

GTP is bound by residues 9–11, Lys-21, Asp-65, and Asp-94; that span reads LAG. Position 94 (Asp-94) interacts with Mg(2+).

Belongs to the MobA family. The cofactor is Mg(2+).

It is found in the cytoplasm. It catalyses the reaction Mo-molybdopterin + GTP + H(+) = Mo-molybdopterin guanine dinucleotide + diphosphate. Functionally, transfers a GMP moiety from GTP to Mo-molybdopterin (Mo-MPT) cofactor (Moco or molybdenum cofactor) to form Mo-molybdopterin guanine dinucleotide (Mo-MGD) cofactor. This Carboxydothermus hydrogenoformans (strain ATCC BAA-161 / DSM 6008 / Z-2901) protein is Probable molybdenum cofactor guanylyltransferase.